Reading from the N-terminus, the 166-residue chain is UPF0304 protein VS_1049 (166 aa).

This sequence belongs to the UPF0304 family.

The sequence is that of UPF0304 protein VS_1049 from Vibrio atlanticus (strain LGP32) (Vibrio splendidus (strain Mel32)).